Reading from the N-terminus, the 130-residue chain is Small ribosomal subunit protein uS8 (130 aa).

It belongs to the universal ribosomal protein uS8 family. In terms of assembly, part of the 30S ribosomal subunit. Contacts proteins S5 and S12.

One of the primary rRNA binding proteins, it binds directly to 16S rRNA central domain where it helps coordinate assembly of the platform of the 30S subunit. The polypeptide is Small ribosomal subunit protein uS8 (Sodalis glossinidius (strain morsitans)).